The following is a 285-amino-acid chain: Putative alkaline ceramidase dcd3B (285 aa).

3 helical membrane-spanning segments follow: residues 34–54 (TFSSFIITAFGVYGIFLMMSA), 77–97 (VLFSYLSLAIVGVGSAFYHAT), and 104–124 (LFDEFPMMLTASMFVYCILTI). Asparagine 131 is a glycosylation site (N-linked (GlcNAc...) asparagine). Transmembrane regions (helical) follow at residues 141 to 161 (RFLPYILSLYVIVVAITITII), 166 to 186 (IILQSSFGLLIFSNVFLSYMY), 200 to 220 (PKKFLYLCIASMGIAYISWLT), and 236 to 256 (LHAVWHALTGLAGFYYIQFFI).

The protein belongs to the alkaline ceramidase family.

It localises to the membrane. The protein is Putative alkaline ceramidase dcd3B (dcd3B) of Dictyostelium discoideum (Social amoeba).